We begin with the raw amino-acid sequence, 142 residues long: Cytidine deaminase (142 aa).

Residues Arg9–Ser139 enclose the CMP/dCMP-type deaminase domain. Asn50–Glu52 serves as a coordination point for substrate. Zn(2+) is bound at residue Cys61. The active-site Proton donor is Glu63. 2 residues coordinate Zn(2+): Cys96 and Cys99.

The protein belongs to the cytidine and deoxycytidylate deaminase family. In terms of assembly, homodimer. Zn(2+) is required as a cofactor.

The enzyme catalyses cytidine + H2O + H(+) = uridine + NH4(+). It catalyses the reaction 2'-deoxycytidine + H2O + H(+) = 2'-deoxyuridine + NH4(+). Its function is as follows. This enzyme scavenges exogenous and endogenous cytidine and 2'-deoxycytidine for UMP synthesis. In Saccharomyces cerevisiae (strain ATCC 204508 / S288c) (Baker's yeast), this protein is Cytidine deaminase (CDD1).